The sequence spans 720 residues: Heat shock protein homolog pss1 (720 aa).

Residue Ser-38 is modified to Phosphoserine. Residue Thr-39 is modified to Phosphothreonine. Residues Lys-658–Thr-690 show a composition bias toward basic and acidic residues. Residues Lys-658–Glu-720 are disordered. The span at Val-703–Glu-720 shows a compositional bias: acidic residues.

This sequence belongs to the heat shock protein 70 family.

The protein localises to the cytoplasm. Its function is as follows. Required for normal growth at various temperatures. The polypeptide is Heat shock protein homolog pss1 (pss1) (Schizosaccharomyces pombe (strain 972 / ATCC 24843) (Fission yeast)).